Consider the following 1707-residue polypeptide: Mediator of DNA damage checkpoint protein 1 (1707 aa).

Positions 1 to 23 (MESTQVIDWDAEEEEETELSSGS) are disordered. The interaction with CHEK2 stretch occupies residues 1–150 (MESTQVIDWD…PRSLLTIEKT (150 aa)). Residues 2–222 (ESTQVIDWDA…SSPFGLGSDT (221 aa)) are interaction with the MRN complex. Thr4 carries the phosphothreonine modification. The span at 9 to 18 (WDAEEEEETE) shows a compositional bias: acidic residues. In terms of domain architecture, FHA spans 54–105 (NVVGRSPDCSVALPFPSISKQHAVIEISAWNKAPILQDCGSLNGTQIVKPPR). At Thr146 the chain carries Phosphothreonine. A disordered region spans residues 166 to 328 (ADSEEEGDFP…EERIPVTPPV (163 aa)). Phosphoserine occurs at positions 168 and 176. Polar residues predominate over residues 183-192 (GQRNTASPSA). Ser198 and Ser220 each carry phosphoserine. Thr222 carries the post-translational modification Phosphothreonine. A compositionally biased stretch (polar residues) spans 252–263 (ANGTTAGIQAQP). Residues 264–278 (TEHKLKDTKVKKEAG) show a composition bias toward basic and acidic residues. Position 298 is a phosphoserine (Ser298). Thr300 bears the Phosphothreonine mark. Position 313 is a phosphoserine (Ser313). Residue Thr315 is modified to Phosphothreonine. Phosphoserine is present on Ser360. At Thr362 the chain carries Phosphothreonine. Positions 369–378 (ALDVPLERNH) are enriched in basic and acidic residues. Positions 369 to 398 (ALDVPLERNHTPMVINSDTDEEEEEEEEVS) are disordered. Ser385 bears the Phosphoserine mark. Residues 386 to 397 (DTDEEEEEEEEV) show a composition bias toward acidic residues. Residue Thr387 is modified to Phosphothreonine. Ser398, Ser415, Ser425, Ser438, and Ser442 each carry phosphoserine. Disordered regions lie at residues 417-497 (DPGA…PGSH), 520-642 (PGPS…AKEC), 679-699 (LFPC…QTPG), and 718-746 (REQS…HQHL). Polar residues predominate over residues 425 to 439 (SQPQVLVEQSQSASG). Thr444 carries the post-translational modification Phosphothreonine. Ser461 carries the phosphoserine modification. Thr470 carries the phosphothreonine modification. Phosphoserine is present on residues Ser492, Ser493, Ser591, Ser593, and Ser595. Positions 580 to 595 (VSEQESTLEVRSQSGS) are enriched in polar residues. The span at 626–642 (GREREAHVGRTKSAKEC) shows a compositional bias: basic and acidic residues. A compositionally biased stretch (basic and acidic residues) spans 719-730 (EQSETSELHEAH). Phosphoserine occurs at positions 735 and 750. Lys769 carries the N6-acetyllysine modification. 3 stretches are compositionally biased toward basic and acidic residues: residues 778-804 (ADRM…RDVI), 812-868 (TKDR…REWE), and 875-889 (TPDR…HDQK). 2 disordered regions span residues 778–899 (ADRM…TLKP) and 914–1510 (IITG…QETA). Ser885, Ser929, and Ser962 each carry phosphoserine. Over residues 968–986 (STQSLLTSQSQKQSTPQPL) the composition is skewed to low complexity. Ser991 is modified (phosphoserine). 3 stretches are compositionally biased toward polar residues: residues 1026 to 1056 (PNTT…STRT), 1068 to 1086 (QPST…SQVT), and 1101 to 1113 (EIQS…QSVT). Thr1056 bears the Phosphothreonine mark. Residues Ser1104, Ser1126, and Ser1128 each carry the phosphoserine modification. Thr1132, Thr1173, and Thr1234 each carry phosphothreonine. Polar residues-rich tracts occupy residues 1225-1241 (PLTS…TSRA), 1265-1281 (PSTS…SSQA), 1295-1308 (VPTT…TSKK), and 1317-1326 (LVTQGRTYKP). Phosphothreonine occurs at positions 1297 and 1298. The residue at position 1327 (Ser1327) is a Phosphoserine. Over residues 1343–1363 (PSTSTDHLVTPKVTDQSLTLQ) the composition is skewed to polar residues. Position 1352 is a phosphothreonine (Thr1352). Ser1359 carries the phosphoserine modification. Positions 1364 to 1376 (SSPLSASPVSSTP) are enriched in low complexity. At Thr1375 the chain carries Phosphothreonine. Residues 1378-1393 (LKPPVPIAQPVTPEPI) are compositionally biased toward pro residues. A Glycyl lysine isopeptide (Lys-Gly) (interchain with G-Cter in SUMO2) cross-link involves residue Lys1418. Over residues 1421–1441 (SALSEPEPQSSASQSSGASEA) the composition is skewed to low complexity. Residues Ser1435, Ser1436, Ser1439, and Ser1443 each carry the phosphoserine modification. Residues 1459–1473 (VIKEEPVETEVKEEP) are compositionally biased toward basic and acidic residues. Residue Lys1461 forms a Glycyl lysine isopeptide (Lys-Gly) (interchain with G-Cter in SUMO1); alternate linkage. Lys1461 participates in a covalent cross-link: Glycyl lysine isopeptide (Lys-Gly) (interchain with G-Cter in SUMO2); alternate. At Thr1480 the chain carries Phosphothreonine. Basic and acidic residues predominate over residues 1481–1493 (PEKRKRDHAEEVT). At Lys1496 the chain carries N6-acetyllysine. BRCT domains are found at residues 1510–1588 (APKV…DYLV) and 1609–1700 (RERR…FVLS).

As to quaternary structure, homodimer. Interacts with H2AX, which requires phosphorylation of H2AX on 'Ser-139'. Interacts with the MRN complex, composed of MRE11, RAD50, and NBN. Interacts with CHEK2, which requires ATM-mediated phosphorylation of 'Thr-68' within the FHA domain of CHEK2. Interacts constitutively with the BRCA1-BARD1 complex, SMC1A and TP53BP1. Interacts with ATM and FANCD2, and these interactions are reduced upon DNA damage. Also interacts with the PRKDC complex, composed of XRCC6/KU70, XRCC5/KU80 and PRKDC/XRCC7. This interaction may be required for PRKDC autophosphorylation, which is essential for DNA double strand break (DSB) repair. When phosphorylated by ATM, interacts with RNF8 (via FHA domain). Interacts with CEP164. When phosphorylated, interacts with APTX (via FHA-like domain). Interacts (when phosphorylated) with TOPBP1; promoting TOPBP1 localization to DNA damage sites during mitosis. Interacts (when phosphorylated) with NBN; promoting NBN and MRN complex localization to DNA damage sites. In terms of processing, phosphorylated upon exposure to ionizing radiation (IR), ultraviolet radiation (UV), and hydroxyurea (HU). Phosphorylation in response to IR requires ATM, NBN, and possibly CHEK2. Also phosphorylated during the G2/M phase of the cell cycle and during activation of the mitotic spindle checkpoint. Phosphorylation at Thr-4 by ATM stabilizes and enhances homodimerization via the FHA domain. Phosphorylated at Ser-168 and Ser-198 by CK2 in response to DNA damage during mitosis, promoting interaction with TOPBP1. Phosphorylated by CK2 in response to DNA damage, promoting interaction with NBN and recruitment of the MRN complex to DNA damage sites. Sumoylation at Lys-1461 by PIAS4 following DNA damage promotes ubiquitin-mediated degradation. Post-translationally, ubiquitinated by RNF4, leading to proteasomal degradation; undergoes 'Lys-48'-linked polyubiquitination.

Its subcellular location is the nucleus. It is found in the chromosome. Functionally, histone reader protein required for checkpoint-mediated cell cycle arrest in response to DNA damage within both the S phase and G2/M phases of the cell cycle. Specifically recognizes and binds histone H2AX phosphorylated at 'Ser-139', a marker of DNA damage, serving as a scaffold for the recruitment of DNA repair and signal transduction proteins to discrete foci of DNA damage sites. Also required for downstream events subsequent to the recruitment of these proteins. These include phosphorylation and activation of the ATM, CHEK1 and CHEK2 kinases, and stabilization of TP53/p53 and apoptosis. ATM and CHEK2 may also be activated independently by a parallel pathway mediated by TP53BP1. Required for chromosomal stability during mitosis by promoting recruitment of TOPBP1 to DNA double strand breaks (DSBs): TOPBP1 forms filamentous assemblies that bridge MDC1 and tether broken chromosomes during mitosis. Required for the repair of DSBs via homologous recombination by promoting recruitment of NBN component of the MRN complex to DSBs. The polypeptide is Mediator of DNA damage checkpoint protein 1 (Mdc1) (Mus musculus (Mouse)).